A 469-amino-acid polypeptide reads, in one-letter code: Argininosuccinate lyase (469 aa).

Belongs to the lyase 1 family. Argininosuccinate lyase subfamily.

The protein localises to the cytoplasm. The catalysed reaction is 2-(N(omega)-L-arginino)succinate = fumarate + L-arginine. It functions in the pathway amino-acid biosynthesis; L-arginine biosynthesis; L-arginine from L-ornithine and carbamoyl phosphate: step 3/3. This is Argininosuccinate lyase from Saccharophagus degradans (strain 2-40 / ATCC 43961 / DSM 17024).